The primary structure comprises 163 residues: Transcription antitermination protein NusB (163 aa).

This sequence belongs to the NusB family.

Involved in transcription antitermination. Required for transcription of ribosomal RNA (rRNA) genes. Binds specifically to the boxA antiterminator sequence of the ribosomal RNA (rrn) operons. This is Transcription antitermination protein NusB from Granulibacter bethesdensis (strain ATCC BAA-1260 / CGDNIH1).